The chain runs to 319 residues: Olfactory receptor 10Q1 (319 aa).

At 1 to 29 the chain is on the extracellular side; sequence MPVGKLVFNQSEPTEFVFRAFTTATEFQV. Residue Asn-9 is glycosylated (N-linked (GlcNAc...) asparagine). Residues 30–50 form a helical membrane-spanning segment; sequence LLFLLFLLLYLMILCGNTAII. At 51-58 the chain is on the cytoplasmic side; sequence WVVCTHST. Residues 59-79 traverse the membrane as a helical segment; it reads LRTPMYFFLSNLSFLELCYTT. Topologically, residues 80-103 are extracellular; sequence VVVPLMLSNILGAQKPISLAGCGA. Cysteines 101 and 194 form a disulfide. The chain crosses the membrane as a helical span at residues 104–124; sequence QMFFFVTLGSTDCFLLAIMAY. At 125–143 the chain is on the cytoplasmic side; the sequence is DRYVAICHPLHYTLIMTRE. A helical membrane pass occupies residues 144-164; it reads LCTQMLGGALGLALFPSLQLT. Residues 165–202 lie on the Extracellular side of the membrane; the sequence is ALIFTLPFCGHHQEINHFLCDVPPVLRLACADIRVHQA. A helical transmembrane segment spans residues 203–222; sequence VLYVVSILVLTIPFLLICVS. Topologically, residues 223–242 are cytoplasmic; the sequence is YVFITCAILSIRSAEGRRRA. Residues 243 to 263 form a helical membrane-spanning segment; the sequence is FSTCSFHLTVVLLQYGCCSLV. At 264–276 the chain is on the extracellular side; it reads YLRPRSSTSEDED. Residues 277 to 297 form a helical membrane-spanning segment; that stretch reads SQIALVYTFVTPLLNPLLYSL. At 298 to 319 the chain is on the cytoplasmic side; it reads RNKDVKGALRSAIIRKAASDAN.

Belongs to the G-protein coupled receptor 1 family.

It localises to the cell membrane. Its function is as follows. Odorant receptor. The polypeptide is Olfactory receptor 10Q1 (OR10Q1) (Homo sapiens (Human)).